The chain runs to 344 residues: MLTARLSRPLSQLPRKTLNFSDRENGTRGSLLLYSAPFVPVGRRTYAASVDPVGSKAVLITGCDSGFGFSLAKHLHSEGFLVFAGCLMKDKGSDGVKELDSMKSDRLRTVQLNVCKSEEVDKAAEVIRSSLEDPEKGLWGLVNNAGISTFGDVEFTSMETYKEVAEVNLWGTVRVTKAFLPLIRRAKGRVVNISSMMGRMANVARSPYCITKFGVEAFSDCLRYEMHPLGVKVSVVEPGNFIAATSLYGGTERIQAIANKMWEELPEVVRQDYGRKYFDEKVARMESYCTSGSTDTSPVIKAVTHALTATTPYTRYHPMDYYWWLRMQIMTHFPGAISDRIYIH.

A mitochondrion-targeting transit peptide spans 1 to 46 (MLTARLSRPLSQLPRKTLNFSDRENGTRGSLLLYSAPFVPVGRRTY). Residue 59–83 (LITGCDSGFGFSLAKHLHSEGFLVF) coordinates NAD(+). An N6-acetyllysine mark is found at lysine 73 and lysine 97. Lysine 103 is modified (N6-acetyllysine; alternate). The residue at position 103 (lysine 103) is an N6-succinyllysine; alternate. N6-acetyllysine is present on lysine 177. Serine 195 serves as a coordination point for substrate. The active-site Proton acceptor is tyrosine 208. Lysine 212 carries the N6-acetyllysine modification. Serine 219 is a glycosylation site (O-linked (GlcNAc) serine). Serine 246 bears the Phosphoserine mark. At lysine 260 the chain carries N6-acetyllysine; alternate. The residue at position 260 (lysine 260) is an N6-succinyllysine; alternate. Position 281 is an N6-acetyllysine (lysine 281).

Belongs to the short-chain dehydrogenases/reductases (SDR) family. Homotetramer.

Its subcellular location is the mitochondrion inner membrane. It is found in the mitochondrion matrix. The enzyme catalyses (R)-3-hydroxybutanoate + NAD(+) = acetoacetate + NADH + H(+). With respect to regulation, requires phosphatidylcholine as an allosteric activator for enzymatic activity. In Bos taurus (Bovine), this protein is D-beta-hydroxybutyrate dehydrogenase, mitochondrial.